The following is a 334-amino-acid chain: Fructose-1,6-bisphosphatase class 1 (334 aa).

E90, D113, L115, and D116 together coordinate Mg(2+). Residues 116–119 (DGSS), N209, Y242, and K272 each bind substrate. E278 serves as a coordination point for Mg(2+).

It belongs to the FBPase class 1 family. Homotetramer. Mg(2+) is required as a cofactor.

Its subcellular location is the cytoplasm. The enzyme catalyses beta-D-fructose 1,6-bisphosphate + H2O = beta-D-fructose 6-phosphate + phosphate. Its pathway is carbohydrate biosynthesis; gluconeogenesis. This chain is Fructose-1,6-bisphosphatase class 1, found in Haemophilus ducreyi (strain 35000HP / ATCC 700724).